The following is a 360-amino-acid chain: Peptide chain release factor 1 (360 aa).

Position 235 is an N5-methylglutamine (glutamine 235).

Belongs to the prokaryotic/mitochondrial release factor family. Methylated by PrmC. Methylation increases the termination efficiency of RF1.

The protein resides in the cytoplasm. Its function is as follows. Peptide chain release factor 1 directs the termination of translation in response to the peptide chain termination codons UAG and UAA. In Bordetella pertussis (strain Tohama I / ATCC BAA-589 / NCTC 13251), this protein is Peptide chain release factor 1.